The chain runs to 65 residues: Large ribosomal subunit protein bL35 (65 aa).

Residues 1 to 26 (MPKMKTNRASAKRFKKTASGGFKAGQ) are disordered.

The protein belongs to the bacterial ribosomal protein bL35 family.

The sequence is that of Large ribosomal subunit protein bL35 from Oenococcus oeni (strain ATCC BAA-331 / PSU-1).